The following is a 398-amino-acid chain: 1-deoxy-D-xylulose 5-phosphate reductoisomerase (398 aa).

The NADPH site is built by Thr10, Gly11, Ser12, Ile13, Gly36, Arg37, Asn38, and Asn124. Position 125 (Lys125) interacts with 1-deoxy-D-xylulose 5-phosphate. Position 126 (Glu126) interacts with NADPH. Position 150 (Asp150) interacts with Mn(2+). Residues Ser151, Glu152, Ser186, and His209 each contribute to the 1-deoxy-D-xylulose 5-phosphate site. Residue Glu152 participates in Mn(2+) binding. Gly215 is a binding site for NADPH. 4 residues coordinate 1-deoxy-D-xylulose 5-phosphate: Ser222, Asn227, Lys228, and Glu231. A Mn(2+)-binding site is contributed by Glu231.

Belongs to the DXR family. In terms of assembly, homodimer. It depends on Mg(2+) as a cofactor. Mn(2+) is required as a cofactor.

The catalysed reaction is 2-C-methyl-D-erythritol 4-phosphate + NADP(+) = 1-deoxy-D-xylulose 5-phosphate + NADPH + H(+). It participates in isoprenoid biosynthesis; isopentenyl diphosphate biosynthesis via DXP pathway; isopentenyl diphosphate from 1-deoxy-D-xylulose 5-phosphate: step 1/6. Its function is as follows. Catalyzes the NADPH-dependent rearrangement and reduction of 1-deoxy-D-xylulose-5-phosphate (DXP) to 2-C-methyl-D-erythritol 4-phosphate (MEP). In Yersinia pseudotuberculosis serotype IB (strain PB1/+), this protein is 1-deoxy-D-xylulose 5-phosphate reductoisomerase.